The following is a 203-amino-acid chain: Orotate phosphoribosyltransferase (203 aa).

Residues Arg-94, Lys-98, His-100, and Glu-120–Ser-128 contribute to the 5-phospho-alpha-D-ribose 1-diphosphate site. Ser-124 serves as a coordination point for orotate.

It belongs to the purine/pyrimidine phosphoribosyltransferase family. PyrE subfamily. Homodimer. Mg(2+) is required as a cofactor.

The enzyme catalyses orotidine 5'-phosphate + diphosphate = orotate + 5-phospho-alpha-D-ribose 1-diphosphate. It participates in pyrimidine metabolism; UMP biosynthesis via de novo pathway; UMP from orotate: step 1/2. Functionally, catalyzes the transfer of a ribosyl phosphate group from 5-phosphoribose 1-diphosphate to orotate, leading to the formation of orotidine monophosphate (OMP). The protein is Orotate phosphoribosyltransferase of Staphylococcus aureus (strain MSSA476).